The chain runs to 250 residues: Probable septum site-determining protein MinC (250 aa).

Positions 110–143 (SGARERPLEPEPEVVKKPEPAPAPPPPPEPEVRP) are disordered. Over residues 112-128 (ARERPLEPEPEVVKKPE) the composition is skewed to basic and acidic residues. Positions 129–138 (PAPAPPPPPE) are enriched in pro residues.

It belongs to the MinC family. As to quaternary structure, interacts with MinD and FtsZ.

Functionally, cell division inhibitor that blocks the formation of polar Z ring septums. Rapidly oscillates between the poles of the cell to destabilize FtsZ filaments that have formed before they mature into polar Z rings. Prevents FtsZ polymerization. This Pseudomonas putida (strain ATCC 47054 / DSM 6125 / CFBP 8728 / NCIMB 11950 / KT2440) protein is Probable septum site-determining protein MinC.